The following is a 386-amino-acid chain: tRNA-specific 2-thiouridylase MnmA (386 aa).

ATP is bound by residues 9-16 (GMSGGVDS) and Met-35. The segment at 95–97 (NPD) is interaction with target base in tRNA. Cys-100 acts as the Nucleophile in catalysis. Cys-100 and Cys-196 are joined by a disulfide. Gly-124 is a binding site for ATP. Residues 146–148 (KDQ) form an interaction with tRNA region. Cys-196 functions as the Cysteine persulfide intermediate in the catalytic mechanism. The tract at residues 308–309 (RY) is interaction with tRNA.

It belongs to the MnmA/TRMU family.

Its subcellular location is the cytoplasm. The enzyme catalyses S-sulfanyl-L-cysteinyl-[protein] + uridine(34) in tRNA + AH2 + ATP = 2-thiouridine(34) in tRNA + L-cysteinyl-[protein] + A + AMP + diphosphate + H(+). Catalyzes the 2-thiolation of uridine at the wobble position (U34) of tRNA, leading to the formation of s(2)U34. The protein is tRNA-specific 2-thiouridylase MnmA of Burkholderia thailandensis (strain ATCC 700388 / DSM 13276 / CCUG 48851 / CIP 106301 / E264).